A 103-amino-acid chain; its full sequence is Acylphosphatase-2 (103 aa).

S2 bears the N-acetylserine mark. Residues 13–103 (SVDYEVFGRV…LDFSGFSTRY (91 aa)) form the Acylphosphatase-like domain. Residues R28 and N46 contribute to the active site.

The protein belongs to the acylphosphatase family.

It catalyses the reaction an acyl phosphate + H2O = a carboxylate + phosphate + H(+). Its function is as follows. Its physiological role is not yet clear. The polypeptide is Acylphosphatase-2 (ACYP2) (Anas platyrhynchos (Mallard)).